A 239-amino-acid polypeptide reads, in one-letter code: Protein GrpE (239 aa).

Disordered stretches follow at residues 1-54 (MIEN…ELKN) and 208-239 (SMGPGKQNSQEEVEKDKVEGDIDSEENTSEDV). The segment covering 19-42 (QDNALENVSSAQELTTENNELSSQ) has biased composition (polar residues). Over residues 43–53 (KTEEINTEELK) the composition is skewed to basic and acidic residues. The segment covering 228–239 (DIDSEENTSEDV) has biased composition (acidic residues).

It belongs to the GrpE family. As to quaternary structure, homodimer.

Its subcellular location is the cytoplasm. Functionally, participates actively in the response to hyperosmotic and heat shock by preventing the aggregation of stress-denatured proteins, in association with DnaK and GrpE. It is the nucleotide exchange factor for DnaK and may function as a thermosensor. Unfolded proteins bind initially to DnaJ; upon interaction with the DnaJ-bound protein, DnaK hydrolyzes its bound ATP, resulting in the formation of a stable complex. GrpE releases ADP from DnaK; ATP binding to DnaK triggers the release of the substrate protein, thus completing the reaction cycle. Several rounds of ATP-dependent interactions between DnaJ, DnaK and GrpE are required for fully efficient folding. The sequence is that of Protein GrpE from Prochlorococcus marinus (strain AS9601).